Consider the following 70-residue polypeptide: ATP synthase subunit c (70 aa).

A run of 2 helical transmembrane segments spans residues 4–24 (IAAAIAIGLGALGAGIGNGLI) and 45–65 (LMFIGVALVEALPIIAVVIAF).

The protein belongs to the ATPase C chain family. As to quaternary structure, F-type ATPases have 2 components, F(1) - the catalytic core - and F(0) - the membrane proton channel. F(1) has five subunits: alpha(3), beta(3), gamma(1), delta(1), epsilon(1). F(0) has three main subunits: a(1), b(2) and c(10-14). The alpha and beta chains form an alternating ring which encloses part of the gamma chain. F(1) is attached to F(0) by a central stalk formed by the gamma and epsilon chains, while a peripheral stalk is formed by the delta and b chains.

It is found in the cell membrane. F(1)F(0) ATP synthase produces ATP from ADP in the presence of a proton or sodium gradient. F-type ATPases consist of two structural domains, F(1) containing the extramembraneous catalytic core and F(0) containing the membrane proton channel, linked together by a central stalk and a peripheral stalk. During catalysis, ATP synthesis in the catalytic domain of F(1) is coupled via a rotary mechanism of the central stalk subunits to proton translocation. The chain is ATP synthase subunit c from Bacillus pumilus (strain SAFR-032).